The following is a 160-amino-acid chain: uncharacterized protein (160 aa).

3 C2H2-type zinc fingers span residues 10–32, 41–64, and 75–98; these read LSCL…LPTH, QTCD…KRYH, and FQCQ…KIEH. Position 115 is a phosphotyrosine (Tyr-115). Ser-116 carries the phosphoserine modification.

It is found in the nucleus. Its function is as follows. May be involved in transcriptional regulation. This is an uncharacterized protein from Drosophila melanogaster (Fruit fly).